Here is a 119-residue protein sequence, read N- to C-terminus: Holo-[acyl-carrier-protein] synthase (119 aa).

Mg(2+)-binding residues include Asp8 and Glu53.

The protein belongs to the P-Pant transferase superfamily. AcpS family. Mg(2+) is required as a cofactor.

Its subcellular location is the cytoplasm. The enzyme catalyses apo-[ACP] + CoA = holo-[ACP] + adenosine 3',5'-bisphosphate + H(+). In terms of biological role, transfers the 4'-phosphopantetheine moiety from coenzyme A to a Ser of acyl-carrier-protein. The chain is Holo-[acyl-carrier-protein] synthase from Petrotoga mobilis (strain DSM 10674 / SJ95).